The following is a 482-amino-acid chain: Succinate-semialdehyde dehydrogenase [NADP(+)] GabD (482 aa).

NADP(+)-binding positions include 156–157 (WN), 180–183 (KPAS), and 233–234 (GS). Residue Glu-255 is the Proton acceptor of the active site. Residue Leu-256 coordinates NADP(+). Cys-289 functions as the Nucleophile in the catalytic mechanism. Residue Glu-386 coordinates NADP(+).

It belongs to the aldehyde dehydrogenase family. In terms of assembly, homotetramer.

It carries out the reaction succinate semialdehyde + NADP(+) + H2O = succinate + NADPH + 2 H(+). The catalysed reaction is 5-oxopentanoate + NADP(+) + H2O = glutarate + NADPH + 2 H(+). It participates in amino-acid degradation; 4-aminobutanoate degradation. Its pathway is amino-acid degradation. In terms of biological role, catalyzes the NADP(+)-dependent oxidation of succinate semialdehyde to succinate. Thereby functions in a GABA degradation pathway that allows some E.coli strains to utilize GABA as a nitrogen source for growth. Also catalyzes the conversion of glutarate semialdehyde to glutarate, as part of a L-lysine degradation pathway that proceeds via cadaverine, glutarate and L-2-hydroxyglutarate. The protein is Succinate-semialdehyde dehydrogenase [NADP(+)] GabD (gabD) of Escherichia coli (strain K12).